A 226-amino-acid polypeptide reads, in one-letter code: Pre-mRNA-splicing factor SPF27 (226 aa).

An N-acetylalanine modification is found at Ala-2. Ser-94 carries the post-translational modification Phosphoserine. Residues 139–223 (YNENLVHMIE…HGEANKENIR (85 aa)) adopt a coiled-coil conformation.

The protein belongs to the SPF27 family. As to quaternary structure, component of the pre-catalytic and catalytic spliceosome complexes. Component of the postcatalytic spliceosome P complex. Component of the PRP19-CDC5L splicing complex composed of a core complex comprising a homotetramer of PRPF19, CDC5L, PLRG1 and BCAS2, and at least three less stably associated proteins CTNNBL1, CWC15 and HSPA8. Interacts directly in the complex with PRPF19, CDC5L and PLRG1.

It localises to the nucleus. It is found in the nucleolus. Required for pre-mRNA splicing as component of the activated spliceosome. Component of the PRP19-CDC5L complex that forms an integral part of the spliceosome and is required for activating pre-mRNA splicing. May have a scaffolding role in the spliceosome assembly as it contacts all other components of the core complex. The PRP19-CDC5L complex may also play a role in the response to DNA damage (DDR). In Pongo abelii (Sumatran orangutan), this protein is Pre-mRNA-splicing factor SPF27 (BCAS2).